Reading from the N-terminus, the 225-residue chain is Phosphoribosylformylglycinamidine synthase subunit PurQ (225 aa).

Residues 5–225 (SAVITFPGSN…ESVVRGLVEA (221 aa)) form the Glutamine amidotransferase type-1 domain. The active-site Nucleophile is Cys-89. Catalysis depends on residues His-197 and Glu-199.

In terms of assembly, part of the FGAM synthase complex composed of 1 PurL, 1 PurQ and 2 PurS subunits.

Its subcellular location is the cytoplasm. The catalysed reaction is N(2)-formyl-N(1)-(5-phospho-beta-D-ribosyl)glycinamide + L-glutamine + ATP + H2O = 2-formamido-N(1)-(5-O-phospho-beta-D-ribosyl)acetamidine + L-glutamate + ADP + phosphate + H(+). The enzyme catalyses L-glutamine + H2O = L-glutamate + NH4(+). It functions in the pathway purine metabolism; IMP biosynthesis via de novo pathway; 5-amino-1-(5-phospho-D-ribosyl)imidazole from N(2)-formyl-N(1)-(5-phospho-D-ribosyl)glycinamide: step 1/2. In terms of biological role, part of the phosphoribosylformylglycinamidine synthase complex involved in the purines biosynthetic pathway. Catalyzes the ATP-dependent conversion of formylglycinamide ribonucleotide (FGAR) and glutamine to yield formylglycinamidine ribonucleotide (FGAM) and glutamate. The FGAM synthase complex is composed of three subunits. PurQ produces an ammonia molecule by converting glutamine to glutamate. PurL transfers the ammonia molecule to FGAR to form FGAM in an ATP-dependent manner. PurS interacts with PurQ and PurL and is thought to assist in the transfer of the ammonia molecule from PurQ to PurL. This is Phosphoribosylformylglycinamidine synthase subunit PurQ from Novosphingobium aromaticivorans (strain ATCC 700278 / DSM 12444 / CCUG 56034 / CIP 105152 / NBRC 16084 / F199).